A 76-amino-acid chain; its full sequence is Small ribosomal subunit protein bS18 (76 aa).

Belongs to the bacterial ribosomal protein bS18 family. In terms of assembly, part of the 30S ribosomal subunit. Forms a tight heterodimer with protein bS6.

Binds as a heterodimer with protein bS6 to the central domain of the 16S rRNA, where it helps stabilize the platform of the 30S subunit. The chain is Small ribosomal subunit protein bS18 from Pseudomonas entomophila (strain L48).